The sequence spans 234 residues: Protein SSP120 (234 aa).

A signal peptide spans 1–22; the sequence is MRFLRGFVFSLAFTLYKVTATA. EF-hand domains lie at 52–87 and 108–143; these read LKDYTPETFFALHDIKKKGFLDENDILSLYGLNREE and MAKRVVSLIMRLLDVDDNTKITKEEYLQFAKRGNKF. Position 212 is a phosphothreonine (threonine 212).

The sequence is that of Protein SSP120 (SSP120) from Saccharomyces cerevisiae (strain ATCC 204508 / S288c) (Baker's yeast).